The chain runs to 160 residues: Probable chemoreceptor glutamine deamidase CheD 1 (160 aa).

It belongs to the CheD family.

It carries out the reaction L-glutaminyl-[protein] + H2O = L-glutamyl-[protein] + NH4(+). Its function is as follows. Probably deamidates glutamine residues to glutamate on methyl-accepting chemotaxis receptors (MCPs), playing an important role in chemotaxis. The polypeptide is Probable chemoreceptor glutamine deamidase CheD 1 (Syntrophus aciditrophicus (strain SB)).